The primary structure comprises 672 residues: DNA-directed RNA polymerase subunit gamma (672 aa).

Zn(2+) is bound by residues C70, C72, C85, and C88. Residues D466, D468, and D470 each contribute to the Mg(2+) site.

It belongs to the RNA polymerase beta' chain family. RpoC1 subfamily. In terms of assembly, in cyanobacteria the RNAP catalytic core is composed of 2 alpha, 1 beta, 1 beta', 1 gamma and 1 omega subunit. When a sigma factor is associated with the core the holoenzyme is formed, which can initiate transcription. Requires Mg(2+) as cofactor. Zn(2+) is required as a cofactor.

It catalyses the reaction RNA(n) + a ribonucleoside 5'-triphosphate = RNA(n+1) + diphosphate. DNA-dependent RNA polymerase catalyzes the transcription of DNA into RNA using the four ribonucleoside triphosphates as substrates. The polypeptide is DNA-directed RNA polymerase subunit gamma (Trichodesmium erythraeum (strain IMS101)).